Here is a 248-residue protein sequence, read N- to C-terminus: Phosphoribosylaminoimidazole-succinocarboxamide synthase (248 aa).

Belongs to the SAICAR synthetase family.

It catalyses the reaction 5-amino-1-(5-phospho-D-ribosyl)imidazole-4-carboxylate + L-aspartate + ATP = (2S)-2-[5-amino-1-(5-phospho-beta-D-ribosyl)imidazole-4-carboxamido]succinate + ADP + phosphate + 2 H(+). The protein operates within purine metabolism; IMP biosynthesis via de novo pathway; 5-amino-1-(5-phospho-D-ribosyl)imidazole-4-carboxamide from 5-amino-1-(5-phospho-D-ribosyl)imidazole-4-carboxylate: step 1/2. The protein is Phosphoribosylaminoimidazole-succinocarboxamide synthase (purC) of Methanothermobacter thermautotrophicus (strain ATCC 29096 / DSM 1053 / JCM 10044 / NBRC 100330 / Delta H) (Methanobacterium thermoautotrophicum).